The chain runs to 285 residues: 4-diphosphocytidyl-2-C-methyl-D-erythritol kinase (285 aa).

Lys11 is an active-site residue. An ATP-binding site is contributed by Pro93–Ala103. The active site involves Asp135.

Belongs to the GHMP kinase family. IspE subfamily.

The catalysed reaction is 4-CDP-2-C-methyl-D-erythritol + ATP = 4-CDP-2-C-methyl-D-erythritol 2-phosphate + ADP + H(+). It participates in isoprenoid biosynthesis; isopentenyl diphosphate biosynthesis via DXP pathway; isopentenyl diphosphate from 1-deoxy-D-xylulose 5-phosphate: step 3/6. Functionally, catalyzes the phosphorylation of the position 2 hydroxy group of 4-diphosphocytidyl-2C-methyl-D-erythritol. In Moorella thermoacetica (strain ATCC 39073 / JCM 9320), this protein is 4-diphosphocytidyl-2-C-methyl-D-erythritol kinase.